A 497-amino-acid chain; its full sequence is MEKWWFNSMLSNEELEHRCGLSKSMDSLGAIGNSSGSEDPVINDTDKNIHSWSDIDSSSYSNVDHLFGVRNIRNFISDDTFLVRDRTGDSYSIYLDIENEIFEIDNDRSFLSELESYFSSYLNNRSKSDTHYYDRYMYDTKYTWNNHINSCIDSYIRSEISIDSYISSGSDNYDNYSDSYISSYICSESVINSSDSGSYSIRTSTSTNGSDFNIRGRYNDLDINKKYRHLWIQCENCYGLNYKKFFRSKMNICEQCGYHLKMSSSDRIELSIDPGTWDPMDEDMVSIDPIEFHSEEEPYKDRIDSYQRKTGLTEAVQTGIGQLNGIPIAIGVMDFQFMGGSMGSVVGEKITRLIEYATNGSLPLIIVCASGGARMQEGSLSLMQMAKISSASYDYQSNKKLFYVSILTSPTTGGVTASFGMLGDIIIAEPNAYIAFAGKRVIEQTLNKTVPEGSQAAEYSFHKGLFDSIVPRNLLKGVLSELFQLHGFFPLNQNSIK.

The 268-residue stretch at 230–497 (LWIQCENCYG…FFPLNQNSIK (268 aa)) folds into the CoA carboxyltransferase N-terminal domain. Zn(2+) is bound by residues Cys234, Cys237, Cys253, and Cys256. The C4-type zinc finger occupies 234–256 (CENCYGLNYKKFFRSKMNICEQC).

The protein belongs to the AccD/PCCB family. As to quaternary structure, acetyl-CoA carboxylase is a heterohexamer composed of biotin carboxyl carrier protein, biotin carboxylase and 2 subunits each of ACCase subunit alpha and ACCase plastid-coded subunit beta (accD). Zn(2+) serves as cofactor.

The protein localises to the plastid. The protein resides in the chloroplast stroma. The enzyme catalyses N(6)-carboxybiotinyl-L-lysyl-[protein] + acetyl-CoA = N(6)-biotinyl-L-lysyl-[protein] + malonyl-CoA. It participates in lipid metabolism; malonyl-CoA biosynthesis; malonyl-CoA from acetyl-CoA: step 1/1. Its function is as follows. Component of the acetyl coenzyme A carboxylase (ACC) complex. Biotin carboxylase (BC) catalyzes the carboxylation of biotin on its carrier protein (BCCP) and then the CO(2) group is transferred by the transcarboxylase to acetyl-CoA to form malonyl-CoA. The polypeptide is Acetyl-coenzyme A carboxylase carboxyl transferase subunit beta, chloroplastic (Platanus occidentalis (Sycamore)).